We begin with the raw amino-acid sequence, 260 residues long: Transcriptional activator protein AsaR (260 aa).

The HTH luxR-type domain occupies 176–241 (EDDPQEALTD…QAIAKGVSSG (66 aa)). Residues 200 to 219 (SGEIACILGITERTVNYHLN) constitute a DNA-binding region (H-T-H motif).

It belongs to the autoinducer-regulated transcriptional regulatory protein family.

In terms of biological role, functions as a BHL-responsive transcriptional regulator. This chain is Transcriptional activator protein AsaR, found in Aeromonas salmonicida.